A 167-amino-acid polypeptide reads, in one-letter code: MQVEVGQIVNTHGIKGEVKVKSNSDFTDTRFQPGEVLTVNHQNHEEQLTVLSYRVHKGFHMLKFEGINNINDVEQYKGDYLYQERDHEDIELAENEYYYSDIIGSTVFDNDNQPIGRVINIFETGANDVWVVKGEKEYLIPYIADVVKEIDIENKTIRITPMEGLLD.

The 72-residue stretch at E94–L165 folds into the PRC barrel domain.

This sequence belongs to the RimM family. In terms of assembly, binds ribosomal protein uS19.

It localises to the cytoplasm. An accessory protein needed during the final step in the assembly of 30S ribosomal subunit, possibly for assembly of the head region. Essential for efficient processing of 16S rRNA. May be needed both before and after RbfA during the maturation of 16S rRNA. It has affinity for free ribosomal 30S subunits but not for 70S ribosomes. This Staphylococcus haemolyticus (strain JCSC1435) protein is Ribosome maturation factor RimM.